The following is a 66-amino-acid chain: Large ribosomal subunit protein bL35 (66 aa).

Basic residues predominate over residues 1-26 (MPKMKTHRGGAKRVKRTGSGKLKRSR). 2 disordered regions span residues 1–28 (MPKM…SRAY) and 36–55 (KSTK…KGDQ).

Belongs to the bacterial ribosomal protein bL35 family.

This chain is Large ribosomal subunit protein bL35, found in Macrococcus caseolyticus (strain JCSC5402) (Macrococcoides caseolyticum).